The primary structure comprises 258 residues: Electron transfer flavoprotein beta subunit lysine methyltransferase (258 aa).

The protein belongs to the methyltransferase superfamily. ETFBKMT family.

Its subcellular location is the cytoplasm. The protein resides in the mitochondrion matrix. It carries out the reaction L-lysyl-[protein] + 3 S-adenosyl-L-methionine = N(6),N(6),N(6)-trimethyl-L-lysyl-[protein] + 3 S-adenosyl-L-homocysteine + 3 H(+). Functionally, protein-lysine methyltransferase that selectively trimethylates the flavoprotein ETFB in mitochondria. Thereby, may negatively regulate the function of ETFB in electron transfer from Acyl-CoA dehydrogenases to the main respiratory chain. This is Electron transfer flavoprotein beta subunit lysine methyltransferase from Danio rerio (Zebrafish).